The sequence spans 1790 residues: Cytokinesis protein sepA (1790 aa).

Disordered stretches follow at residues 1 to 275 (MPTS…YLTR) and 328 to 350 (GEQK…GILE). The span at 24 to 35 (ERPVEDRWDAHG) shows a compositional bias: basic and acidic residues. 2 stretches are compositionally biased toward low complexity: residues 39–62 (SLAP…SIQS) and 187–203 (SHHS…SRMS). Over residues 205-236 (DQASIHSSLSSNTRGSSYISTDGSSRTTLPSH) the composition is skewed to polar residues. Positions 274–702 (TRPRDDRVVD…YVAMDRRLPD (429 aa)) constitute a GBD/FH3 domain. The segment covering 328 to 341 (GEQKRKQKARETHG) has biased composition (basic and acidic residues). Residues 724–811 (AEARRAYDES…QRNELETREL (88 aa)) adopt a coiled-coil conformation. The region spanning 955 to 1136 (DPEQATGLLG…NYLASQGAPS (182 aa)) is the FH1 domain. Residues 975–986 (ADDAKDEGKPTE) show a composition bias toward basic and acidic residues. Disordered stretches follow at residues 975 to 1119 (ADDA…PPGT), 1465 to 1484 (NLSD…ITQR), and 1596 to 1790 (RAAA…PSTS). 2 stretches are compositionally biased toward pro residues: residues 1015-1026 (APPPPPPPPPAH) and 1033-1118 (APPP…PPPG). The FH2 domain maps to 1141–1564 (VMSSIRPKKK…TEASLARKRI (424 aa)). Residues 1435 to 1566 (LQKLNVDQLR…ASLARKRINV (132 aa)) are a coiled coil. In terms of domain architecture, DAD spans 1581 to 1613 (SPATSGAMDSLLEKLRAAAPQAKDQRDRRRRAR). Residues 1608-1620 (RRRRARLKERHQV) show a composition bias toward basic residues. Over residues 1644 to 1661 (SGATDTNATDSSLLSPTI) the composition is skewed to polar residues. Positions 1694–1710 (PDPERTRRRRESAEEER) are enriched in basic and acidic residues. Residues 1720–1746 (GATSGSKDSNDTTPLSPVTEPTSTQGE) are compositionally biased toward polar residues.

Belongs to the formin homology family. BNI1 subfamily.

In terms of biological role, involved in cytokinesis. Overexpression results in growth inhibition. The protein is Cytokinesis protein sepA (sepA) of Emericella nidulans (strain FGSC A4 / ATCC 38163 / CBS 112.46 / NRRL 194 / M139) (Aspergillus nidulans).